The following is a 301-amino-acid chain: Probable alpha-L-glutamate ligase (301 aa).

An ATP-grasp domain is found at 104–287 (LQLLSRKGIG…VAGMIIQYLE (184 aa)). Residues Lys-141, 178 to 179 (EY), Asp-187, and 211 to 213 (RSN) contribute to the ATP site. Asp-248, Glu-260, and Asn-262 together coordinate Mg(2+). Positions 248, 260, and 262 each coordinate Mn(2+).

Belongs to the RimK family. Requires Mg(2+) as cofactor. It depends on Mn(2+) as a cofactor.

In Ectopseudomonas mendocina (strain ymp) (Pseudomonas mendocina), this protein is Probable alpha-L-glutamate ligase.